Here is a 367-residue protein sequence, read N- to C-terminus: Palmitoyltransferase ZDHHC2 (367 aa).

At 1 to 16 (MAPSGPGSSARRRCRR) the chain is on the cytoplasmic side. A helical transmembrane segment spans residues 17 to 37 (VLYWIPVVFITLLLGWSYYAY). At 38–54 (AIQLCIVSMENTGEQVV) the chain is on the lumenal side. A helical transmembrane segment spans residues 55-75 (CLMAYHLLFAMFVWSYWKTIF). Over 76–170 (TLPMNPSKEF…NNCVGFSNYK (95 aa)) the chain is Cytoplasmic. Residues 127–177 (RYCDRCQLIKPDRCHHCSVCDKCILKMDHHCPWVNNCVGFSNYKFFLLFLA) form the DHHC domain. Cys157 (S-palmitoyl cysteine intermediate) is an active-site residue. The helical transmembrane segment at 171–191 (FFLLFLAYSLLYCLFIAATDL) threads the bilayer. Topologically, residues 192 to 208 (QYFIKFWTNGLPDTQAK) are lumenal. The helical transmembrane segment at 209-229 (FHIMFLFFAAAMFSVSLSSLF) threads the bilayer. Residues 230-367 (GYHCWLVSKN…NPALTMENET (138 aa)) lie on the Cytoplasmic side of the membrane. The segment at 299–367 (NQDPEQASTP…NPALTMENET (69 aa)) is mediates localization to plasma membrane and recycling endosomes. Residues 330–367 (ESQSHLLTDSQSWTESSINPGKCKAGMSNPALTMENET) form a disordered region. Over residues 333–348 (SHLLTDSQSWTESSIN) the composition is skewed to polar residues. The Non-canonical dileucine endocytic signal signature appears at 335–336 (LL). Ser341 carries the post-translational modification Phosphoserine. The NPxY-like endocytic signal signature appears at 358–361 (NPAL).

This sequence belongs to the DHHC palmitoyltransferase family. Monomer. Homodimer. The monomeric form has a higher catalytic activity. Post-translationally, autopalmitoylated. Ubiquitously expressed. Reduced expression in colorectal cancers with liver metastasis.

It localises to the postsynaptic density. It is found in the postsynaptic recycling endosome membrane. The protein resides in the cell membrane. Its subcellular location is the endoplasmic reticulum membrane. The protein localises to the golgi apparatus membrane. The enzyme catalyses L-cysteinyl-[protein] + hexadecanoyl-CoA = S-hexadecanoyl-L-cysteinyl-[protein] + CoA. It carries out the reaction L-cysteinyl-[protein] + tetradecanoyl-CoA = S-tetradecanoyl-L-cysteinyl-[protein] + CoA. The catalysed reaction is L-cysteinyl-[protein] + octadecanoyl-CoA = S-octadecanoyl-L-cysteinyl-[protein] + CoA. Its function is as follows. Palmitoyltransferase that catalyzes the addition of palmitate onto various protein substrates and is involved in a variety of cellular processes. Has no stringent fatty acid selectivity and in addition to palmitate can also transfer onto target proteins myristate from tetradecanoyl-CoA and stearate from octadecanoyl-CoA. In the nervous system, plays a role in long term synaptic potentiation by palmitoylating AKAP5 through which it regulates protein trafficking from the dendritic recycling endosomes to the plasma membrane and controls both structural and functional plasticity at excitatory synapses. In dendrites, mediates the palmitoylation of DLG4 when synaptic activity decreases and induces synaptic clustering of DLG4 and associated AMPA-type glutamate receptors. Also mediates the de novo and turnover palmitoylation of RGS7BP, a shuttle for Gi/o-specific GTPase-activating proteins/GAPs, promoting its localization to the plasma membrane in response to the activation of G protein-coupled receptors. Through the localization of these GTPase-activating proteins/GAPs, it also probably plays a role in G protein-coupled receptors signaling in neurons. Also probably plays a role in cell adhesion by palmitoylating CD9 and CD151 to regulate their expression and function. Palmitoylates the endoplasmic reticulum protein CKAP4 and regulates its localization to the plasma membrane. Could also palmitoylate LCK and regulate its localization to the plasma membrane. In terms of biological role, (Microbial infection) Promotes Chikungunya virus (CHIKV) replication by mediating viral nsp1 palmitoylation. In Homo sapiens (Human), this protein is Palmitoyltransferase ZDHHC2.